The following is a 408-amino-acid chain: NADH-quinone oxidoreductase subunit D (408 aa).

It belongs to the complex I 49 kDa subunit family. NDH-1 is composed of 14 different subunits. Subunits NuoB, C, D, E, F, and G constitute the peripheral sector of the complex.

The protein resides in the cell inner membrane. It carries out the reaction a quinone + NADH + 5 H(+)(in) = a quinol + NAD(+) + 4 H(+)(out). In terms of biological role, NDH-1 shuttles electrons from NADH, via FMN and iron-sulfur (Fe-S) centers, to quinones in the respiratory chain. The immediate electron acceptor for the enzyme in this species is believed to be ubiquinone. Couples the redox reaction to proton translocation (for every two electrons transferred, four hydrogen ions are translocated across the cytoplasmic membrane), and thus conserves the redox energy in a proton gradient. This is NADH-quinone oxidoreductase subunit D from Campylobacter hominis (strain ATCC BAA-381 / DSM 21671 / CCUG 45161 / LMG 19568 / NCTC 13146 / CH001A).